A 244-amino-acid chain; its full sequence is Biosynthetic peptidoglycan transglycosylase (244 aa).

Residues 25 to 45 (LLLLLTAALLYQSWFLLHIVY) form a helical membrane-spanning segment.

It belongs to the glycosyltransferase 51 family.

It localises to the cell inner membrane. The enzyme catalyses [GlcNAc-(1-&gt;4)-Mur2Ac(oyl-L-Ala-gamma-D-Glu-L-Lys-D-Ala-D-Ala)](n)-di-trans,octa-cis-undecaprenyl diphosphate + beta-D-GlcNAc-(1-&gt;4)-Mur2Ac(oyl-L-Ala-gamma-D-Glu-L-Lys-D-Ala-D-Ala)-di-trans,octa-cis-undecaprenyl diphosphate = [GlcNAc-(1-&gt;4)-Mur2Ac(oyl-L-Ala-gamma-D-Glu-L-Lys-D-Ala-D-Ala)](n+1)-di-trans,octa-cis-undecaprenyl diphosphate + di-trans,octa-cis-undecaprenyl diphosphate + H(+). Its pathway is cell wall biogenesis; peptidoglycan biosynthesis. Functionally, peptidoglycan polymerase that catalyzes glycan chain elongation from lipid-linked precursors. The chain is Biosynthetic peptidoglycan transglycosylase from Nitrosomonas europaea (strain ATCC 19718 / CIP 103999 / KCTC 2705 / NBRC 14298).